Here is a 344-residue protein sequence, read N- to C-terminus: Holliday junction branch migration complex subunit RuvB (344 aa).

The tract at residues 1–183 (MLDERLISSH…FGISCRLDFY (183 aa)) is large ATPase domain (RuvB-L). Residues I22, R23, G64, K67, T68, T69, 130–132 (EDY), R173, Y183, and R220 each bind ATP. T68 lines the Mg(2+) pocket. Positions 184–254 (TPLELSEIIL…LAKWALEMLE (71 aa)) are small ATPAse domain (RuvB-S). The tract at residues 257–344 (ECGLDVMDRM…LEGKGLFSDA (88 aa)) is head domain (RuvB-H). DNA is bound by residues K312 and R317.

This sequence belongs to the RuvB family. In terms of assembly, homohexamer. Forms an RuvA(8)-RuvB(12)-Holliday junction (HJ) complex. HJ DNA is sandwiched between 2 RuvA tetramers; dsDNA enters through RuvA and exits via RuvB. An RuvB hexamer assembles on each DNA strand where it exits the tetramer. Each RuvB hexamer is contacted by two RuvA subunits (via domain III) on 2 adjacent RuvB subunits; this complex drives branch migration. In the full resolvosome a probable DNA-RuvA(4)-RuvB(12)-RuvC(2) complex forms which resolves the HJ.

Its subcellular location is the cytoplasm. The enzyme catalyses ATP + H2O = ADP + phosphate + H(+). Its function is as follows. The RuvA-RuvB-RuvC complex processes Holliday junction (HJ) DNA during genetic recombination and DNA repair, while the RuvA-RuvB complex plays an important role in the rescue of blocked DNA replication forks via replication fork reversal (RFR). RuvA specifically binds to HJ cruciform DNA, conferring on it an open structure. The RuvB hexamer acts as an ATP-dependent pump, pulling dsDNA into and through the RuvAB complex. RuvB forms 2 homohexamers on either side of HJ DNA bound by 1 or 2 RuvA tetramers; 4 subunits per hexamer contact DNA at a time. Coordinated motions by a converter formed by DNA-disengaged RuvB subunits stimulates ATP hydrolysis and nucleotide exchange. Immobilization of the converter enables RuvB to convert the ATP-contained energy into a lever motion, pulling 2 nucleotides of DNA out of the RuvA tetramer per ATP hydrolyzed, thus driving DNA branch migration. The RuvB motors rotate together with the DNA substrate, which together with the progressing nucleotide cycle form the mechanistic basis for DNA recombination by continuous HJ branch migration. Branch migration allows RuvC to scan DNA until it finds its consensus sequence, where it cleaves and resolves cruciform DNA. The sequence is that of Holliday junction branch migration complex subunit RuvB from Syntrophomonas wolfei subsp. wolfei (strain DSM 2245B / Goettingen).